The chain runs to 71 residues: Disintegrin simusmin (71 aa).

A Disintegrin domain is found at 1-71 (AGEECDCGSP…SADCPRNPFH (71 aa)). 6 disulfide bridges follow: Cys-5-Cys-20, Cys-7-Cys-15, Cys-14-Cys-37, Cys-28-Cys-34, Cys-33-Cys-58, and Cys-46-Cys-65. The Cell attachment site motif lies at 50 to 52 (RGD).

The protein belongs to the venom metalloproteinase (M12B) family. P-II subfamily. P-IIa sub-subfamily. As to quaternary structure, monomer. In terms of tissue distribution, expressed by the venom gland.

The protein resides in the secreted. In terms of biological role, inhibits ADP- (IC(50)=56 nM) and collagen-induced (IC(50)=49 nM) aggregation of human platelets. In vitro, inhibits adhesion of endothelial cells to vitronectin, type-I collagen and, to a lower degree, fibronectin and laminin. In Crotalus simus (Central American rattlesnake), this protein is Disintegrin simusmin.